The primary structure comprises 443 residues: tRNA-2-methylthio-N(6)-dimethylallyladenosine synthase (443 aa).

The region spanning 3-120 (SKLYIKTFGC…LPELIDARRR (118 aa)) is the MTTase N-terminal domain. [4Fe-4S] cluster contacts are provided by cysteine 12, cysteine 49, cysteine 83, cysteine 157, cysteine 161, and cysteine 164. The 235-residue stretch at 143 to 377 (RTTGATAFVS…KIQRNAQMIS (235 aa)) folds into the Radical SAM core domain. Residues 378 to 441 (QSMVDTIQRV…SHTLRGEISD (64 aa)) enclose the TRAM domain.

The protein belongs to the methylthiotransferase family. MiaB subfamily. As to quaternary structure, monomer. [4Fe-4S] cluster is required as a cofactor.

Its subcellular location is the cytoplasm. It catalyses the reaction N(6)-dimethylallyladenosine(37) in tRNA + (sulfur carrier)-SH + AH2 + 2 S-adenosyl-L-methionine = 2-methylsulfanyl-N(6)-dimethylallyladenosine(37) in tRNA + (sulfur carrier)-H + 5'-deoxyadenosine + L-methionine + A + S-adenosyl-L-homocysteine + 2 H(+). Catalyzes the methylthiolation of N6-(dimethylallyl)adenosine (i(6)A), leading to the formation of 2-methylthio-N6-(dimethylallyl)adenosine (ms(2)i(6)A) at position 37 in tRNAs that read codons beginning with uridine. This is tRNA-2-methylthio-N(6)-dimethylallyladenosine synthase from Nitrosomonas eutropha (strain DSM 101675 / C91 / Nm57).